Here is a 320-residue protein sequence, read N- to C-terminus: MKRIGILTSGGDAPGMNAAIRAVTKTAIHHGLEVFGIRYGFAGLVAGDFIPLTTENVDHKISEGGTFLYSARFPEFAQEEVQQKGVEQLKKHGIDAVIVIGGDGSYHGALALTRHGVNSVGLPGTIDNDIPYTDYTIGFDSACRTAMDAIDKIRDTASSHHRVFVVNVMGRECGDIAMRVGVASGADAIVIPERPYDVKEIAETIKRGFADGKDHGIIVLAEGVMDAEEFKDELLKYGDFDARANVLAHMQRGGSPTVEDRVNATKMGNYAVNLLLDGKGGLAVGMENGKLNTHDILDLFDSKHQGDFSLLDVNEEMTKD.

An ATP-binding site is contributed by Gly-11. Position 21-25 (21-25) interacts with ADP; the sequence is RAVTK. ATP contacts are provided by residues 72–73 and 102–105; these read RF and GDGS. Asp-103 contributes to the Mg(2+) binding site. Residue 125–127 participates in substrate binding; that stretch reads TID. The Proton acceptor role is filled by Asp-127. Arg-154 is a binding site for ADP. Residues Arg-162 and 169 to 171 each bind substrate; that span reads MGR. ADP contacts are provided by residues 185-187 and 213-215; these read GAD and KDH. Substrate contacts are provided by residues Glu-222, Arg-243, and 249–252; that span reads HMQR.

Belongs to the phosphofructokinase type A (PFKA) family. ATP-dependent PFK group I subfamily. Prokaryotic clade 'B1' sub-subfamily. As to quaternary structure, homotetramer. Requires Mg(2+) as cofactor.

It localises to the cytoplasm. It carries out the reaction beta-D-fructose 6-phosphate + ATP = beta-D-fructose 1,6-bisphosphate + ADP + H(+). It participates in carbohydrate degradation; glycolysis; D-glyceraldehyde 3-phosphate and glycerone phosphate from D-glucose: step 3/4. Its activity is regulated as follows. Allosterically activated by ADP and other diphosphonucleosides, and allosterically inhibited by phosphoenolpyruvate. Its function is as follows. Catalyzes the phosphorylation of D-fructose 6-phosphate to fructose 1,6-bisphosphate by ATP, the first committing step of glycolysis. This chain is ATP-dependent 6-phosphofructokinase, found in Lactobacillus acidophilus (strain ATCC 700396 / NCK56 / N2 / NCFM).